Here is a 292-residue protein sequence, read N- to C-terminus: Small ribosomal subunit biogenesis GTPase RsgA (292 aa).

One can recognise a CP-type G domain in the interval 62 to 213 (KNSLVRPPIV…IADTPGFSSL (152 aa)). GTP contacts are provided by residues 111-114 (SKMD) and 156-164 (GQTGVGKST). Positions 237, 242, 244, and 250 each coordinate Zn(2+).

Belongs to the TRAFAC class YlqF/YawG GTPase family. RsgA subfamily. As to quaternary structure, monomer. Associates with 30S ribosomal subunit, binds 16S rRNA. Zn(2+) serves as cofactor.

Its subcellular location is the cytoplasm. Its function is as follows. One of several proteins that assist in the late maturation steps of the functional core of the 30S ribosomal subunit. Helps release RbfA from mature subunits. May play a role in the assembly of ribosomal proteins into the subunit. Circularly permuted GTPase that catalyzes slow GTP hydrolysis, GTPase activity is stimulated by the 30S ribosomal subunit. The polypeptide is Small ribosomal subunit biogenesis GTPase RsgA (Streptococcus pneumoniae serotype 4 (strain ATCC BAA-334 / TIGR4)).